Consider the following 201-residue polypeptide: Transgelin (201 aa).

N-acetylalanine is present on Ala-2. Positions 24–137 (EELEERLVEW…RTLMALGSLA (114 aa)) constitute a Calponin-homology (CH) domain. Ser-166 carries the post-translational modification Phosphoserine. N6-acetyllysine is present on Lys-172. The Calponin-like repeat unit spans residues 175–200 (IGLQMGSNRGASQAGMTGYGRPRQII). Position 181 is a phosphoserine (Ser-181). Arg-183 carries the post-translational modification Omega-N-methylarginine.

It belongs to the calponin family.

The protein resides in the cytoplasm. Actin cross-linking/gelling protein. This Mus musculus (Mouse) protein is Transgelin (Tagln).